A 274-amino-acid chain; its full sequence is Glutamate--cysteine ligase regulatory subunit (274 aa).

Residue Ser-59 is modified to Phosphoserine. Lys-263 carries the N6-acetyllysine modification.

This sequence belongs to the aldo/keto reductase family. Glutamate--cysteine ligase light chain subfamily. As to quaternary structure, heterodimer of a catalytic heavy chain and a regulatory light chain.

Its pathway is sulfur metabolism; glutathione biosynthesis; glutathione from L-cysteine and L-glutamate: step 1/2. This Bos taurus (Bovine) protein is Glutamate--cysteine ligase regulatory subunit (GCLM).